Reading from the N-terminus, the 154-residue chain is Cysteine-rich DPF motif domain-containing protein 1 (154 aa).

The protein belongs to the CDPF1 family.

This is Cysteine-rich DPF motif domain-containing protein 1 from Drosophila melanogaster (Fruit fly).